Consider the following 85-residue polypeptide: SCOCO-like protein 1 (85 aa).

A compositionally biased stretch (polar residues) spans 1–20 (MSAENISTGSPTGKQPSSEV). Residues 1 to 34 (MSAENISTGSPTGKQPSSEVNLGEREAGTKNERM) form a disordered region. An N-acetylserine modification is found at Ser2. Ser10 is subject to Phosphoserine. Basic and acidic residues predominate over residues 22 to 34 (LGEREAGTKNERM).

It belongs to the SLO1 family. Interacts with ARL3.

The polypeptide is SCOCO-like protein 1 (SLO1) (Saccharomyces cerevisiae (strain ATCC 204508 / S288c) (Baker's yeast)).